The chain runs to 443 residues: Histone deacetylase 10, chloroplastic (443 aa).

The N-terminal 65 residues, 1 to 65, are a transit peptide targeting the chloroplast; that stretch reads MEQLWVPSLP…PSHNGTSISD (65 aa). The segment at 82-412 is histone deacetylase; that stretch reads DAHILYCTSP…FRAFLGEPSL (331 aa). His222 (proton donor/acceptor) is an active-site residue. Positions 259, 261, and 346 each coordinate Zn(2+).

The protein belongs to the histone deacetylase family. Zn(2+) is required as a cofactor. In terms of tissue distribution, expressed in leaves. Expressed in coleoptiles, leaves, flag leaves and flowers. Expressed at low levels in roots.

The protein localises to the plastid. It localises to the chloroplast. Its subcellular location is the mitochondrion. It carries out the reaction N-acetylserotonin + H2O = serotonin + acetate. It catalyses the reaction N-acetyltyramine + H2O = tyramine + acetate. The enzyme catalyses N-acetyltryptamine + H2O = tryptamine + acetate. The catalysed reaction is melatonin + H2O = 5-methoxytryptamine + acetate. Its activity is regulated as follows. The activity of this enzyme is not inhibited by butyrate, a well-known histone deacetylase inhibitor. Functionally, involved in the regulation of melatonin biosynthesis by catalyzing the deacetylation of N-acetylserotonin to produce serotonin. N-acetylserotonin is methylated by acetylserotonin O-methyltransferase (ASMT) to produce melatonin (N-acetyl-5-methoxytryptamine). Deacetylates melatonin to produce 5-methoxytryptamine. In vitro, deacetylates N-acetyltyramine and N-acetyltryptamine to produce tyramine and tryptamine, respectively. This Oryza sativa subsp. japonica (Rice) protein is Histone deacetylase 10, chloroplastic.